We begin with the raw amino-acid sequence, 185 residues long: CASP-like protein 2C1 (185 aa).

Residues 1–12 (MVAARVSEVKAE) lie on the Cytoplasmic side of the membrane. The chain crosses the membrane as a helical span at residues 13-33 (GVLRGACAALAAAAALLVGLS). The Extracellular portion of the chain corresponds to 34–52 (TQTETVLLVRKKATVKDVQ). The helical transmembrane segment at 53–73 (ALWVLAMAAAAAAGYHLLQLL) threads the bilayer. The Cytoplasmic segment spans residues 74–105 (KCFYLGRRVGGGASPCRRSSRALAWTCLLLDK). Residues 106–126 (ACAYTTFATTVAAAQACVIAL) form a helical membrane-spanning segment. The Extracellular segment spans residues 127–147 (DGAHALQWTKLCNIYTRFCEQ). The chain crosses the membrane as a helical span at residues 148–168 (IAGSLVLGMLAAVGTAVLSAA). The Cytoplasmic portion of the chain corresponds to 169-185 (SARNVFRHYSPGTYAAH).

The protein belongs to the Casparian strip membrane proteins (CASP) family. In terms of assembly, homodimer and heterodimers.

Its subcellular location is the cell membrane. This is CASP-like protein 2C1 from Sorghum bicolor (Sorghum).